Reading from the N-terminus, the 815-residue chain is Protein pygopus (815 aa).

2 disordered regions span residues 1–107 (MTHN…QVSA) and 147–711 (GMGG…GPMG). The Nuclear localization signal signature appears at 39 to 45 (PKKRRKT). Over residues 46–73 (SSAANSAAAVAAAAAAAAAANSMQQQQA) the composition is skewed to low complexity. Residues 74 to 86 (PPTPQDLLPPPPM) show a composition bias toward pro residues. Over residues 188 to 199 (RGMSPMHPHQMG) the composition is skewed to low complexity. Composition is skewed to gly residues over residues 230–248 (PMGG…GMGG) and 257–269 (GMGG…GGPN). Residues 307–316 (LGPPSGPGPG) are compositionally biased toward pro residues. Composition is skewed to low complexity over residues 323–341 (GPQQ…NGQM), 407–424 (SNNN…NQNP), 444–478 (PSVS…VPTS), and 495–545 (GPSP…HQQH). Residues 569–580 (PQQPSHLGPPHP) show a composition bias toward pro residues. A compositionally biased stretch (gly residues) spans 602 to 621 (GGPGMHGGPAGMPPHMGGGP). Over residues 622–636 (NPHMMGGPHGNAGPH) the composition is skewed to low complexity. A compositionally biased stretch (gly residues) spans 640–656 (GHMGGVPGPGPGPGGMN). Basic residues predominate over residues 663 to 675 (MSPHHGHPHHHHN). The segment covering 678–711 (GGPGPNMFGGGGGGPMGPGGPMGNMGPMGGGPMG) has biased composition (gly residues). The PHD-type zinc finger occupies 747–805 (IYPCGMCHKEVNDNDEAVFCESGCNFFFHRTCVGLTEAAFQMLNKEVFAEWCCDKCVSS).

In terms of assembly, binds to BCL9 via the PHD-type zinc finger motif, and thereby becomes part of the nuclear ARM/PAN complex. Ubiquitous throughout embryogenesis and larval development.

The protein localises to the nucleus. In terms of biological role, involved in signal transduction through the Wnt pathway. This chain is Protein pygopus (pygo), found in Drosophila melanogaster (Fruit fly).